Here is a 61-residue protein sequence, read N- to C-terminus: Small ribosomal subunit protein uS14 (61 aa).

4 residues coordinate Zn(2+): C24, C27, C40, and C43.

It belongs to the universal ribosomal protein uS14 family. Zinc-binding uS14 subfamily. As to quaternary structure, part of the 30S ribosomal subunit. Contacts proteins S3 and S10. It depends on Zn(2+) as a cofactor.

In terms of biological role, binds 16S rRNA, required for the assembly of 30S particles and may also be responsible for determining the conformation of the 16S rRNA at the A site. In Thermus thermophilus (strain ATCC BAA-163 / DSM 7039 / HB27), this protein is Small ribosomal subunit protein uS14.